The chain runs to 354 residues: Guanine nucleotide-binding protein G(i) subunit alpha-1 (354 aa).

Gly-2 carries the N-myristoyl glycine lipid modification. Cys-3 is lipidated: S-palmitoyl cysteine. The G-alpha domain maps to 32–354 (REVKLLLLGA…KNNLKDCGLF (323 aa)). A G1 motif region spans residues 35 to 48 (KLLLLGAGESGKST). GTP is bound by residues 43 to 48 (ESGKST), 150 to 151 (DS), and 175 to 178 (LRTR). Position 47 (Ser-47) interacts with Mg(2+). The segment at 173–181 (DVLRTRVKT) is G2 motif. Thr-181 serves as a coordination point for Mg(2+). The segment at 196–205 (FKMFDVGGQR) is G3 motif. GTP is bound by residues 200–204 (DVGGQ), 269–272 (NKKD), and Ala-326. The interval 265-272 (ILFLNKKD) is G4 motif. Positions 324–329 (TCATDT) are G5 motif.

Belongs to the G-alpha family. G(i/o/t/z) subfamily. As to quaternary structure, heterotrimeric G proteins are composed of 3 units; alpha, beta and gamma. The alpha chain contains the guanine nucleotide binding site. Part of a spindle orientation complex at least composed of GNAI1, GPSM2 and NUMA1. Identified in complex with the beta subunit GNB1 and the gamma subunit GNG1. Identified in complex with the beta subunit GNB1 and the gamma subunit GNG2. Component of the TAS2R14-GNAI1 complex, consisting of TAS2R14, GNAI1, GNB1 and GNG2; within the complex interacts with TAS2R14; this complex plays a role in the perception of bitterness. GTP binding causes dissociation of the heterotrimer, liberating the individual subunits so that they can interact with downstream effector proteins. Interacts (GDP-bound form) with GPSM1; this inhibits guanine nucleotide exchange and GTP binding. Interacts (GDP-bound form) with GPSM2 (via GoLoco domains); this inhibits guanine nucleotide exchange. Interacts with RGS10; this strongly enhances GTP hydrolysis. Interacts with RGS1 and RGS16; this strongly enhances GTPase activity. Interacts with RGS4. Interacts with RGS12. Interacts (via active GTP- or inactive GDP-bound forms) with RGS14 (via RGS and GoLoco domains). Interacts with RGS3, RGS6, RGS7, RGS8, RGS17, RGS18 and RGS20 (in vitro). Interacts (GDP-bound form) with RIC8A (via C-terminus); promoting GNAI1 folding and association with the plasma membrane. Interacts (inactive GDP-bound form) with NUCB1 (via GBA motif); the interaction leads to activation of GNAI1. Interacts (inactive GDP-bound form) with CCDC88C/DAPLE (via GBA motif); the interaction leads to activation of GNAI1. Interacts (inactive GDP-bound form) with CCDC8A/GIV (via GBA motif). Post-translationally, myristoylation at Gly-2 is required for membrane anchoring before palmitoylation. Palmitoylation at Cys-3 varies with membrane lipid composition.

The protein resides in the nucleus. The protein localises to the cytoplasm. It localises to the cell membrane. Its subcellular location is the cytoskeleton. It is found in the microtubule organizing center. The protein resides in the centrosome. The protein localises to the cell cortex. It localises to the membrane. It catalyses the reaction GTP + H2O = GDP + phosphate + H(+). Functionally, guanine nucleotide-binding proteins (G proteins) function as transducers downstream of G protein-coupled receptors (GPCRs) in numerous signaling cascades. The alpha chain contains the guanine nucleotide binding site and alternates between an active, GTP-bound state and an inactive, GDP-bound state. Signaling by an activated GPCR promotes GDP release and GTP binding. The alpha subunit has a low GTPase activity that converts bound GTP to GDP, thereby terminating the signal. Both GDP release and GTP hydrolysis are modulated by numerous regulatory proteins. Signaling is mediated via effector proteins, such as adenylate cyclase. Inhibits adenylate cyclase activity of ADCY1, ADCY5 and ADCY6, leading to decreased intracellular cAMP levels. The inactive GDP-bound form prevents the association of RGS14 with centrosomes and is required for the translocation of RGS14 from the cytoplasm to the plasma membrane. Required for normal cytokinesis during mitosis. Required for cortical dynein-dynactin complex recruitment during metaphase. This is Guanine nucleotide-binding protein G(i) subunit alpha-1 (GNAI1) from Bos taurus (Bovine).